Consider the following 528-residue polypeptide: Aurora kinase (528 aa).

Disordered regions lie at residues 1 to 35 (MMLPRNSPHRTESTLAYNNNNSNNNNNNNGSSLFQ) and 48 to 235 (ISKP…KPQQ). 2 stretches are compositionally biased toward low complexity: residues 18–29 (NNNNSNNNNNNN) and 59–94 (HSHTFTTPTPKTRNTATTTTNNNNRNNHQYRNPNLN). A compositionally biased stretch (polar residues) spans 95 to 104 (TSLVFTPTKN). Residues 105-120 (SSSSSSSHSSSLLSSS) show a composition bias toward low complexity. Residues 129–155 (QPESNHTRATSHYRTTSTSQYKSSANK) are compositionally biased toward polar residues. The segment covering 185–230 (TTTATQNTNNNKILNPSLSSSTIRFSTVSSSTSSSTTSSSSSSHTS) has biased composition (low complexity). Positions 242–515 (FEFGKILGKG…LKEVLNHNWI (274 aa)) constitute a Protein kinase domain. ATP contacts are provided by residues 248–256 (LGKGKLGRV) and lysine 271. Aspartate 365 serves as the catalytic Proton acceptor.

It belongs to the protein kinase superfamily. Ser/Thr protein kinase family. Aurora subfamily.

Its subcellular location is the nucleus. It localises to the cytoplasm. The protein localises to the cytoskeleton. It is found in the spindle. The protein resides in the chromosome. Its subcellular location is the centromere. It localises to the kinetochore. The enzyme catalyses L-seryl-[protein] + ATP = O-phospho-L-seryl-[protein] + ADP + H(+). It catalyses the reaction L-threonyl-[protein] + ATP = O-phospho-L-threonyl-[protein] + ADP + H(+). Functionally, component of the chromosomal passenger complex (CPC), a complex that acts as a key regulator of chromosome segregation and cytokinesis. Has a role in error-correction of aberrent kinetochore-microtubule attachments to ensure that sister kinetochores become bioriented and connect to opposite poles by promoting spindle assembly checkpoint signaling. The sequence is that of Aurora kinase (IPL1) from Candida albicans (strain SC5314 / ATCC MYA-2876) (Yeast).